The chain runs to 56 residues: UPF0391 membrane protein PSHAa0537 (56 aa).

Helical transmembrane passes span 6 to 26 (ITFLVIALIAAVLGFGGIAGA) and 27 to 47 (AAGIAKIIFFIFLILLVISLV).

The protein belongs to the UPF0391 family.

It localises to the cell membrane. The polypeptide is UPF0391 membrane protein PSHAa0537 (Pseudoalteromonas translucida (strain TAC 125)).